We begin with the raw amino-acid sequence, 90 residues long: Small ribosomal subunit protein uS15c (90 aa).

The protein belongs to the universal ribosomal protein uS15 family. In terms of assembly, part of the 30S ribosomal subunit.

It is found in the plastid. The protein localises to the chloroplast. In Lolium perenne (Perennial ryegrass), this protein is Small ribosomal subunit protein uS15c (rps15-A).